Reading from the N-terminus, the 336-residue chain is Thiamine thiazole synthase (336 aa).

Residues alanine 89, 110–111 (ES), glycine 118, and cysteine 183 each bind substrate. Position 219 is a 2,3-didehydroalanine (Cys) (cysteine 219). Residues aspartate 221, histidine 236, methionine 288, and 298-300 (RMG) each bind substrate.

Belongs to the THI4 family. Homooctamer. It depends on Fe cation as a cofactor. Post-translationally, during the catalytic reaction, a sulfide is transferred from Cys-219 to a reaction intermediate, generating a dehydroalanine residue.

Its subcellular location is the cytoplasm. It is found in the nucleus. The catalysed reaction is [ADP-thiazole synthase]-L-cysteine + glycine + NAD(+) = [ADP-thiazole synthase]-dehydroalanine + ADP-5-ethyl-4-methylthiazole-2-carboxylate + nicotinamide + 3 H2O + 2 H(+). In terms of biological role, involved in biosynthesis of the thiamine precursor thiazole. Catalyzes the conversion of NAD and glycine to adenosine diphosphate 5-(2-hydroxyethyl)-4-methylthiazole-2-carboxylic acid (ADT), an adenylated thiazole intermediate. The reaction includes an iron-dependent sulfide transfer from a conserved cysteine residue of the protein to a thiazole intermediate. The enzyme can only undergo a single turnover, which suggests it is a suicide enzyme. May have additional roles in adaptation to various stress conditions and in DNA damage tolerance. This is Thiamine thiazole synthase from Puccinia graminis f. sp. tritici (strain CRL 75-36-700-3 / race SCCL) (Black stem rust fungus).